Consider the following 255-residue polypeptide: MSVTPIEELPSLGDALEDAKRAASYRAVDENLDPAKHRVVGIGSGSTVVYVAERIGKYQASPELKAKVEFICIPTGFQSRQLILDNGLRLGSIEQYPEVDIAFDGADEVDPELNLIKGGGACLFQEKLVSTSSAQFIVVADSRKRSPQRLGTSWTRGVPVEVVPSAYVRVLRDLHGIPGCRSAQLRLGEPGKAGPVVTDNNNLLIDADFGPLEDPAALHARIKALVGVVETGIFAGNAAKAYFGSADGSTQTLAR.

This sequence belongs to the ribose 5-phosphate isomerase family.

The protein localises to the cytoplasm. It catalyses the reaction aldehydo-D-ribose 5-phosphate = D-ribulose 5-phosphate. It functions in the pathway carbohydrate degradation; pentose phosphate pathway; D-ribose 5-phosphate from D-ribulose 5-phosphate (non-oxidative stage): step 1/1. This is Ribose-5-phosphate isomerase (RKI1) from Eremothecium gossypii (strain ATCC 10895 / CBS 109.51 / FGSC 9923 / NRRL Y-1056) (Yeast).